We begin with the raw amino-acid sequence, 379 residues long: Homoserine O-acetyltransferase (379 aa).

Residues Asn-52–Glu-356 form the AB hydrolase-1 domain. Ser-157 acts as the Nucleophile in catalysis. Arg-227 lines the substrate pocket. Active-site residues include Asp-320 and His-350. Asp-351 contacts substrate.

This sequence belongs to the AB hydrolase superfamily. MetX family. Homodimer.

It localises to the cytoplasm. It catalyses the reaction L-homoserine + acetyl-CoA = O-acetyl-L-homoserine + CoA. The protein operates within amino-acid biosynthesis; L-methionine biosynthesis via de novo pathway; O-acetyl-L-homoserine from L-homoserine: step 1/1. In terms of biological role, transfers an acetyl group from acetyl-CoA to L-homoserine, forming acetyl-L-homoserine. The polypeptide is Homoserine O-acetyltransferase (Mycobacterium marinum (strain ATCC BAA-535 / M)).